The chain runs to 256 residues: Trans-aconitate 2-methyltransferase (256 aa).

The protein belongs to the methyltransferase superfamily. Tam family.

Its subcellular location is the cytoplasm. The enzyme catalyses trans-aconitate + S-adenosyl-L-methionine = (E)-3-(methoxycarbonyl)pent-2-enedioate + S-adenosyl-L-homocysteine. Its function is as follows. Catalyzes the S-adenosylmethionine monomethyl esterification of trans-aconitate. The polypeptide is Trans-aconitate 2-methyltransferase (Rhizobium rhizogenes (strain K84 / ATCC BAA-868) (Agrobacterium radiobacter)).